The following is a 208-amino-acid chain: uncharacterized protein (208 aa).

Disordered regions lie at residues 1-78 and 154-208; these read MDLF…SPTE and RRRS…PRNY. Positions 40 to 51 are enriched in basic residues; it reads KNHKKAQPRRTT. Residues 179 to 197 are compositionally biased toward polar residues; the sequence is ANSSSPNPTATGSETSYGS.

This is an uncharacterized protein from Caenorhabditis elegans.